The chain runs to 145 residues: Large ribosomal subunit protein uL15 (145 aa).

Positions 1 to 58 are disordered; the sequence is MKLHELSPSEGSRKKRKRVGRGPGSGMGGTSTRGNKGHNQRSGGGTRPGFEGGQMPLH. 2 stretches are compositionally biased toward gly residues: residues 21–31 and 42–52; these read RGPGSGMGGTS and SGGGTRPGFEG.

The protein belongs to the universal ribosomal protein uL15 family. As to quaternary structure, part of the 50S ribosomal subunit.

In terms of biological role, binds to the 23S rRNA. The polypeptide is Large ribosomal subunit protein uL15 (Desulforapulum autotrophicum (strain ATCC 43914 / DSM 3382 / VKM B-1955 / HRM2) (Desulfobacterium autotrophicum)).